Reading from the N-terminus, the 494-residue chain is Probable cytosol aminopeptidase (494 aa).

Mn(2+) is bound by residues K260 and D265. The active site involves K272. Residues D283, D342, and E344 each coordinate Mn(2+). R346 is a catalytic residue.

It belongs to the peptidase M17 family. Requires Mn(2+) as cofactor.

It localises to the cytoplasm. It catalyses the reaction Release of an N-terminal amino acid, Xaa-|-Yaa-, in which Xaa is preferably Leu, but may be other amino acids including Pro although not Arg or Lys, and Yaa may be Pro. Amino acid amides and methyl esters are also readily hydrolyzed, but rates on arylamides are exceedingly low.. It carries out the reaction Release of an N-terminal amino acid, preferentially leucine, but not glutamic or aspartic acids.. Presumably involved in the processing and regular turnover of intracellular proteins. Catalyzes the removal of unsubstituted N-terminal amino acids from various peptides. The sequence is that of Probable cytosol aminopeptidase from Bacillus cereus (strain ZK / E33L).